The sequence spans 317 residues: Alkylsulfatase (317 aa).

H78 is a binding site for substrate. Fe cation-binding residues include H105 and D107. V108 contacts substrate. T132 is a 2-oxoglutarate binding site. H261 contacts Fe cation. 2-oxoglutarate is bound by residues R272 and R276.

It belongs to the TfdA dioxygenase family. Homotetramer. Fe(2+) serves as cofactor.

In terms of biological role, alpha-ketoglutarate-dependent dioxygenase that in vitro catalyzes the oxygenolytic release of sulfite from hexylsulfate. This Acinetobacter baylyi (strain ATCC 33305 / BD413 / ADP1) protein is Alkylsulfatase.